Reading from the N-terminus, the 429-residue chain is Serine hydroxymethyltransferase (429 aa).

(6S)-5,6,7,8-tetrahydrofolate contacts are provided by residues Leu-125 and 129 to 131 (GHL). Position 234 is an N6-(pyridoxal phosphate)lysine (Lys-234).

Belongs to the SHMT family. Homodimer. The cofactor is pyridoxal 5'-phosphate.

The protein resides in the cytoplasm. It catalyses the reaction (6R)-5,10-methylene-5,6,7,8-tetrahydrofolate + glycine + H2O = (6S)-5,6,7,8-tetrahydrofolate + L-serine. The protein operates within one-carbon metabolism; tetrahydrofolate interconversion. Its pathway is amino-acid biosynthesis; glycine biosynthesis; glycine from L-serine: step 1/1. Its function is as follows. Catalyzes the reversible interconversion of serine and glycine with tetrahydrofolate (THF) serving as the one-carbon carrier. This reaction serves as the major source of one-carbon groups required for the biosynthesis of purines, thymidylate, methionine, and other important biomolecules. Also exhibits THF-independent aldolase activity toward beta-hydroxyamino acids, producing glycine and aldehydes, via a retro-aldol mechanism. The protein is Serine hydroxymethyltransferase of Allorhizobium ampelinum (strain ATCC BAA-846 / DSM 112012 / S4) (Agrobacterium vitis (strain S4)).